The chain runs to 142 residues: Peptide methionine sulfoxide reductase MsrB (142 aa).

The 124-residue stretch at 2–125 (LKKDKSELTD…NSAAIQFIPY (124 aa)) folds into the MsrB domain. Catalysis depends on cysteine 114, which acts as the Nucleophile.

Belongs to the MsrB Met sulfoxide reductase family.

The enzyme catalyses L-methionyl-[protein] + [thioredoxin]-disulfide + H2O = L-methionyl-(R)-S-oxide-[protein] + [thioredoxin]-dithiol. The protein is Peptide methionine sulfoxide reductase MsrB of Staphylococcus aureus (strain bovine RF122 / ET3-1).